We begin with the raw amino-acid sequence, 287 residues long: Stomatin-like protein 3 (287 aa).

Ser3 is subject to Phosphoserine. A helical; Signal-anchor for type III membrane protein membrane pass occupies residues 25-45 (WILFFLSFLLMLVTFPISVWM). The Cytoplasmic portion of the chain corresponds to 46–287 (CLKIIKEYER…GNNKKVTAKA (242 aa)). At Ser237 the chain carries Phosphoserine.

Belongs to the band 7/mec-2 family. As to quaternary structure, homodimer. Interacts with PIEZO1 and PIEZO2. Expressed by all dorsal root ganglion neurons and is selectively expressed in neuronal tissues. Detected in olfactory epithelium.

The protein resides in the cell membrane. Required for the function of many mechanoreceptors. Modulate mechanotransduction channels and acid-sensing ion channels (ASIC) proteins. Potentiates PIEZO1 and PIEZO2 function by increasing their sensitivity to mechanical stimulations. This is Stomatin-like protein 3 (Stoml3) from Mus musculus (Mouse).